We begin with the raw amino-acid sequence, 183 residues long: Putative manganese efflux pump MntP (183 aa).

Transmembrane regions (helical) follow at residues 8–28, 40–60, 72–92, 108–128, 133–153, and 163–183; these read IIAL…VALG, FYIG…GMAV, ATYA…IASF, LFFA…LGIF, MVTI…GLFV, and SYSE…LLFL.

It belongs to the MntP (TC 9.B.29) family.

It is found in the cell membrane. In terms of biological role, probably functions as a manganese efflux pump. This is Putative manganese efflux pump MntP from Geobacillus kaustophilus (strain HTA426).